A 201-amino-acid chain; its full sequence is Recombination protein RecR (201 aa).

The C4-type zinc finger occupies 59-74; the sequence is CKICGNIDTENICRIC. The 96-residue stretch at 82-177 folds into the Toprim domain; the sequence is SIIAIVETVA…KISRLASGIP (96 aa).

This sequence belongs to the RecR family.

Its function is as follows. May play a role in DNA repair. It seems to be involved in an RecBC-independent recombinational process of DNA repair. It may act with RecF and RecO. This Rickettsia massiliae (strain Mtu5) protein is Recombination protein RecR.